The primary structure comprises 244 residues: 1-(5-phosphoribosyl)-5-[(5-phosphoribosylamino)methylideneamino] imidazole-4-carboxamide isomerase (244 aa).

D8 (proton acceptor) is an active-site residue. The active-site Proton donor is the D130.

It belongs to the HisA/HisF family.

It is found in the cytoplasm. It carries out the reaction 1-(5-phospho-beta-D-ribosyl)-5-[(5-phospho-beta-D-ribosylamino)methylideneamino]imidazole-4-carboxamide = 5-[(5-phospho-1-deoxy-D-ribulos-1-ylimino)methylamino]-1-(5-phospho-beta-D-ribosyl)imidazole-4-carboxamide. It functions in the pathway amino-acid biosynthesis; L-histidine biosynthesis; L-histidine from 5-phospho-alpha-D-ribose 1-diphosphate: step 4/9. In Syntrophomonas wolfei subsp. wolfei (strain DSM 2245B / Goettingen), this protein is 1-(5-phosphoribosyl)-5-[(5-phosphoribosylamino)methylideneamino] imidazole-4-carboxamide isomerase.